The sequence spans 115 residues: ER exit protein (115 aa).

The protein belongs to the STEEP1 family.

Its function is as follows. May stimulate membrane curvature formation and subsequent endoplasmic reticulum exit site (ERES) establishment. This Schizosaccharomyces pombe (strain 972 / ATCC 24843) (Fission yeast) protein is ER exit protein.